A 621-amino-acid polypeptide reads, in one-letter code: Myosin-binding protein C, slow-type (621 aa).

3 consecutive Ig-like C2-type domains span residues glutamate 1 to arginine 53, proline 54 to aspartate 142, and proline 144 to serine 241. Threonine 28 carries the phosphothreonine modification. Serine 233 carries the phosphoserine modification. 3 consecutive Fibronectin type-III domains span residues leucine 244–proline 343, threonine 344–proline 459, and proline 556–asparagine 621. Phosphothreonine is present on threonine 420. Residue tyrosine 445 is modified to Phosphotyrosine. Residues proline 459 to arginine 553 enclose the Ig-like C2-type 4 domain.

Belongs to the immunoglobulin superfamily. MyBP family. As to quaternary structure, interacts with USP25 (isoform USP25m only); the interaction prevents proteasomal degradation of MYBPC1.

Thick filament-associated protein located in the crossbridge region of vertebrate striated muscle a bands. Slow skeletal protein that binds to both myosin and actin. In vitro, binds to native thin filaments and modifies the activity of actin-activated myosin ATPase. May modulate muscle contraction or may play a more structural role. This Rattus norvegicus (Rat) protein is Myosin-binding protein C, slow-type (Mybpc1).